The sequence spans 170 residues: Bifunctional protein PyrR (170 aa).

The PRPP-binding motif lies at Leu-90–Thr-102.

It belongs to the purine/pyrimidine phosphoribosyltransferase family. PyrR subfamily.

It catalyses the reaction UMP + diphosphate = 5-phospho-alpha-D-ribose 1-diphosphate + uracil. Regulates the transcription of the pyrimidine nucleotide (pyr) operon in response to exogenous pyrimidines. Its function is as follows. Also displays a weak uracil phosphoribosyltransferase activity which is not physiologically significant. This is Bifunctional protein PyrR from Pseudomonas paraeruginosa (strain DSM 24068 / PA7) (Pseudomonas aeruginosa (strain PA7)).